Consider the following 1361-residue polypeptide: Protein transport protein SEC16B homolog (1361 aa).

Ser-46 is subject to Phosphoserine. Disordered regions lie at residues 82–109, 487–513, 984–1013, 1025–1062, 1163–1204, 1216–1235, and 1306–1361; these read NEGA…HSDA, VDDA…GRPP, PVGG…QEAT, SSLM…GRTP, ENKS…ARGR, NPPG…VQTA, and SVNG…EVEL. Low complexity predominate over residues 491 to 503; the sequence is PQSFQSSQLFSPS. The segment covering 996 to 1013 has biased composition (polar residues); that stretch reads TKGNLQGNEYQHQQQEAT. Composition is skewed to polar residues over residues 1169-1200, 1222-1234, and 1308-1325; these read IPSN…NQFS, NSHT…SVQT, and NGDN…SWSG. The span at 1326–1354 shows a compositional bias: low complexity; sequence NFNTSFTPPTSPSTFKPVLLNSSSSSLGE.

This sequence belongs to the SEC16 family.

Its subcellular location is the golgi apparatus. It localises to the endoplasmic reticulum. Functionally, required for protein transport from the endoplasmic reticulum to the Golgi apparatus. The chain is Protein transport protein SEC16B homolog from Arabidopsis thaliana (Mouse-ear cress).